A 91-amino-acid polypeptide reads, in one-letter code: Probable Fe(2+)-trafficking protein (91 aa).

It belongs to the Fe(2+)-trafficking protein family.

In terms of biological role, could be a mediator in iron transactions between iron acquisition and iron-requiring processes, such as synthesis and/or repair of Fe-S clusters in biosynthetic enzymes. In Glaesserella parasuis serovar 5 (strain SH0165) (Haemophilus parasuis), this protein is Probable Fe(2+)-trafficking protein.